Here is a 338-residue protein sequence, read N- to C-terminus: Secretory carrier-associated membrane protein 1 (338 aa).

The tract at residues 1–64 is disordered; that stretch reads MSDFDSNPFA…NVPNTQPAIM (64 aa). Residue serine 2 is modified to N-acetylserine. Serine 2 is subject to Phosphoserine. The Cytoplasmic segment spans residues 2–155; that stretch reads SDFDSNPFAD…QKTVKLMYYL (154 aa). Position 45 is a phosphothreonine (threonine 45). Residues 156–176 form a helical membrane-spanning segment; sequence WMFHAVTLFLNIFGCLAWFCV. At 177–181 the chain is on the lumenal side; that stretch reads DSSRA. A helical membrane pass occupies residues 182–202; sequence VDFGLSILWFLLFTPCSFVCW. The Cytoplasmic portion of the chain corresponds to 203–218; it reads YRPLYGAFRSDSSFRF. The chain crosses the membrane as a helical span at residues 219–239; the sequence is FVFFFVYICQFAVHVLQAAGF. The Lumenal portion of the chain corresponds to 240-261; that stretch reads HNWGNCGWISSLTGLNKNIPVG. A helical transmembrane segment spans residues 262–282; it reads IMMIIIAALFTASAVISLVMF. At 283-338 the chain is on the cytoplasmic side; the sequence is KKVHGLYRTTGASFEKAQQEFATGVMSNKTVQTAAANAASTAATSAAQNAFKGNQM.

This sequence belongs to the SCAMP family. As to quaternary structure, interacts with SYNRG, ITSN1 and SLC9A7.

The protein localises to the golgi apparatus. It is found in the trans-Golgi network membrane. It localises to the recycling endosome membrane. Functions in post-Golgi recycling pathways. Acts as a recycling carrier to the cell surface. This Mus musculus (Mouse) protein is Secretory carrier-associated membrane protein 1 (Scamp1).